The following is a 106-amino-acid chain: Large ribosomal subunit protein bL21 (106 aa).

It belongs to the bacterial ribosomal protein bL21 family. In terms of assembly, part of the 50S ribosomal subunit. Contacts protein L20.

This protein binds to 23S rRNA in the presence of protein L20. The protein is Large ribosomal subunit protein bL21 of Xylella fastidiosa (strain 9a5c).